The primary structure comprises 200 residues: 7-methyl-GTP pyrophosphatase (200 aa).

The active-site Proton acceptor is Asp-69.

This sequence belongs to the Maf family. YceF subfamily. A divalent metal cation is required as a cofactor.

It localises to the cytoplasm. It carries out the reaction N(7)-methyl-GTP + H2O = N(7)-methyl-GMP + diphosphate + H(+). In terms of biological role, nucleoside triphosphate pyrophosphatase that hydrolyzes 7-methyl-GTP (m(7)GTP). May have a dual role in cell division arrest and in preventing the incorporation of modified nucleotides into cellular nucleic acids. This Colwellia psychrerythraea (strain 34H / ATCC BAA-681) (Vibrio psychroerythus) protein is 7-methyl-GTP pyrophosphatase.